The chain runs to 374 residues: Probable neutral protease 2 homolog TRV_05367 (374 aa).

The first 19 residues, 1-19 (MQVIVALAALGSLAAPALG), serve as a signal peptide directing secretion. Residues 20-189 (FSIPRGVPVS…RGPLTRINKR (170 aa)) constitute a propeptide that is removed on maturation. Disulfide bonds link Cys197–Cys267 and Cys274–Cys292. His317 provides a ligand contact to Zn(2+). The active site involves Glu318. The Zn(2+) site is built by His321 and Asp332.

It belongs to the peptidase M35 family. Zn(2+) is required as a cofactor.

The protein resides in the secreted. The enzyme catalyses Preferential cleavage of bonds with hydrophobic residues in P1'. Also 3-Asn-|-Gln-4 and 8-Gly-|-Ser-9 bonds in insulin B chain.. Functionally, probable secreted metalloprotease that shows high activities on basic nuclear substrates such as histone and protamine. May be involved in virulence. The sequence is that of Probable neutral protease 2 homolog TRV_05367 from Trichophyton verrucosum (strain HKI 0517).